The primary structure comprises 333 residues: uncharacterized protein (333 aa).

This is an uncharacterized protein from Gallus gallus (Chicken).